A 402-amino-acid polypeptide reads, in one-letter code: uncharacterized protein (402 aa).

This sequence belongs to the peptidase M20 family.

This is an uncharacterized protein from Sinorhizobium fredii (strain NBRC 101917 / NGR234).